Consider the following 437-residue polypeptide: Ribosomal protein uS12 methylthiotransferase RimO (437 aa).

The 112-residue stretch at Ala-3 to Thr-114 folds into the MTTase N-terminal domain. Positions 12, 48, 77, 152, 156, and 159 each coordinate [4Fe-4S] cluster. Residues Thr-138–Arg-367 enclose the Radical SAM core domain. The 67-residue stretch at Ala-370–Gln-436 folds into the TRAM domain.

It belongs to the methylthiotransferase family. RimO subfamily. The cofactor is [4Fe-4S] cluster.

It is found in the cytoplasm. It catalyses the reaction L-aspartate(89)-[ribosomal protein uS12]-hydrogen + (sulfur carrier)-SH + AH2 + 2 S-adenosyl-L-methionine = 3-methylsulfanyl-L-aspartate(89)-[ribosomal protein uS12]-hydrogen + (sulfur carrier)-H + 5'-deoxyadenosine + L-methionine + A + S-adenosyl-L-homocysteine + 2 H(+). In terms of biological role, catalyzes the methylthiolation of an aspartic acid residue of ribosomal protein uS12. The polypeptide is Ribosomal protein uS12 methylthiotransferase RimO (Gloeobacter violaceus (strain ATCC 29082 / PCC 7421)).